A 77-amino-acid chain; its full sequence is U8-lycotoxin-Ls1l (77 aa).

An N-terminal signal peptide occupies residues 1-20 (MKLMIFTGLVLFAIVSLIEA). The propeptide occupies 21–26 (QAENEK).

The protein belongs to the neurotoxin 19 (CSTX) family. 08 (U8-Lctx) subfamily. In terms of processing, contains 4 disulfide bonds. In terms of tissue distribution, expressed by the venom gland.

It localises to the secreted. This chain is U8-lycotoxin-Ls1l, found in Lycosa singoriensis (Wolf spider).